The primary structure comprises 213 residues: RxLR effector protein PexRD1 (213 aa).

Positions 1–19 (MRACNTLLPTAIVLTSCDA) are cleaved as a signal peptide. The RxLR-dEER motif lies at 50–77 (RQLRGFYATENTDPVNNQDTAHEDGEER).

This sequence belongs to the RxLR effector family.

The protein resides in the secreted. Its subcellular location is the host nucleus. Its function is as follows. Effector that enhances P.infestans colonization of Nicotiana benthamiana leaves. This chain is RxLR effector protein PexRD1, found in Phytophthora infestans (strain T30-4) (Potato late blight agent).